We begin with the raw amino-acid sequence, 602 residues long: Type II restriction enzyme StsI (602 aa).

The enzyme catalyses Endonucleolytic cleavage of DNA to give specific double-stranded fragments with terminal 5'-phosphates.. Functionally, an S subtype restriction enzyme that recognizes the double-stranded sequences 5'-GGATG-3' and 3'-CATCC-5' and cleaves respectively 15 bases after G-1 and 14 bases before C-1. The chain is Type II restriction enzyme StsI (stsIR) from Streptococcus sanguinis.